Consider the following 178-residue polypeptide: Large ribosomal subunit protein uL6 (178 aa).

Belongs to the universal ribosomal protein uL6 family. As to quaternary structure, part of the 50S ribosomal subunit.

Functionally, this protein binds to the 23S rRNA, and is important in its secondary structure. It is located near the subunit interface in the base of the L7/L12 stalk, and near the tRNA binding site of the peptidyltransferase center. This is Large ribosomal subunit protein uL6 from Arthrobacter sp. (strain FB24).